A 705-amino-acid chain; its full sequence is Fatty acid oxidation complex subunit alpha (705 aa).

Residues 1 to 188 are enoyl-CoA hydratase; the sequence is MGKTFNLTRR…KMGLVNDVVP (188 aa). Residues 308–705 are 3-hydroxyacyl-CoA dehydrogenase; sequence RKVKKAVILG…AMAAEKARFF (398 aa).

In the N-terminal section; belongs to the enoyl-CoA hydratase/isomerase family. The protein in the central section; belongs to the 3-hydroxyacyl-CoA dehydrogenase family. As to quaternary structure, heterotetramer of two alpha chains (FadJ) and two beta chains (FadI).

The protein resides in the cytoplasm. The catalysed reaction is a (3S)-3-hydroxyacyl-CoA = a (2E)-enoyl-CoA + H2O. It catalyses the reaction a 4-saturated-(3S)-3-hydroxyacyl-CoA = a (3E)-enoyl-CoA + H2O. It carries out the reaction a (3S)-3-hydroxyacyl-CoA + NAD(+) = a 3-oxoacyl-CoA + NADH + H(+). The enzyme catalyses (3S)-3-hydroxybutanoyl-CoA = (3R)-3-hydroxybutanoyl-CoA. It functions in the pathway lipid metabolism; fatty acid beta-oxidation. In terms of biological role, catalyzes the formation of a hydroxyacyl-CoA by addition of water on enoyl-CoA. Also exhibits 3-hydroxyacyl-CoA epimerase and 3-hydroxyacyl-CoA dehydrogenase activities. This chain is Fatty acid oxidation complex subunit alpha, found in Shewanella oneidensis (strain ATCC 700550 / JCM 31522 / CIP 106686 / LMG 19005 / NCIMB 14063 / MR-1).